Here is a 166-residue protein sequence, read N- to C-terminus: Photosystem I assembly protein Ycf3 (166 aa).

TPR repeat units follow at residues 35-68 (AFVY…EVDP), 72-105 (SFIF…NPSL), and 120-153 (GEQA…APLN).

It belongs to the Ycf3 family.

It localises to the plastid. Its subcellular location is the chloroplast thylakoid membrane. Functionally, essential for the assembly of the photosystem I (PSI) complex. May act as a chaperone-like factor to guide the assembly of the PSI subunits. The polypeptide is Photosystem I assembly protein Ycf3 (Ostreococcus tauri).